Reading from the N-terminus, the 176-residue chain is MLLTTLVVGETAPSTTLGTMIVVSGAFLILMLLLKKYAWGAIVDILTQREEKIANDLDSAEQSRVAAAKMEKERQQQLLSSRSEAAEIIKNAKESGEQTRQKTLKETTAEVTRLREKARTDISQEREEALSSVKNEVADLSLQIAAKILNKELTPDAHEALIDSYIESLGKANETR.

Residues 14–34 (STTLGTMIVVSGAFLILMLLL) form a helical membrane-spanning segment.

It belongs to the ATPase B chain family. In terms of assembly, F-type ATPases have 2 components, F(1) - the catalytic core - and F(0) - the membrane proton channel. F(1) has five subunits: alpha(3), beta(3), gamma(1), delta(1), epsilon(1). F(0) has three main subunits: a(1), b(2) and c(10-14). The alpha and beta chains form an alternating ring which encloses part of the gamma chain. F(1) is attached to F(0) by a central stalk formed by the gamma and epsilon chains, while a peripheral stalk is formed by the delta and b chains.

It localises to the cell membrane. Functionally, f(1)F(0) ATP synthase produces ATP from ADP in the presence of a proton or sodium gradient. F-type ATPases consist of two structural domains, F(1) containing the extramembraneous catalytic core and F(0) containing the membrane proton channel, linked together by a central stalk and a peripheral stalk. During catalysis, ATP synthesis in the catalytic domain of F(1) is coupled via a rotary mechanism of the central stalk subunits to proton translocation. In terms of biological role, component of the F(0) channel, it forms part of the peripheral stalk, linking F(1) to F(0). This chain is ATP synthase subunit b, found in Enterococcus faecalis (strain ATCC 700802 / V583).